We begin with the raw amino-acid sequence, 333 residues long: Nucleoid-associated protein HAPS_0704 (333 aa).

This sequence belongs to the YejK family.

Its subcellular location is the cytoplasm. It is found in the nucleoid. In Glaesserella parasuis serovar 5 (strain SH0165) (Haemophilus parasuis), this protein is Nucleoid-associated protein HAPS_0704.